Consider the following 969-residue polypeptide: Squamosa promoter-binding-like protein 6 (969 aa).

Disordered regions lie at residues 1-25 (MEAA…DMDR) and 54-81 (EASG…VNAR). The span at 55–74 (ASGLALNSSPSSSEEAGAAS) shows a compositional bias: low complexity. The SBP-type zinc-finger motif lies at 149-226 (GPACQVEGCT…AGHNRRRRKT (78 aa)). Zn(2+)-binding residues include Cys152, Cys157, Cys174, His177, Cys193, Cys196, His200, and Cys212. The Bipartite nuclear localization signal signature appears at 209–225 (KRSCRRRLAGHNRRRRK). A disordered region spans residues 377–434 (GMEGFEDGYEGSPTPAFKTTDSPNCPSWMHQDSTQSPPQTSGNSDSTSAQSLSSSNGD). The span at 393–419 (FKTTDSPNCPSWMHQDSTQSPPQTSGN) shows a compositional bias: polar residues. The segment covering 420–431 (SDSTSAQSLSSS) has biased composition (low complexity).

Ubiquitous.

The protein resides in the nucleus. Functionally, trans-acting factor that binds specifically to the consensus nucleotide sequence 5'-TNCGTACAA-3'. The sequence is that of Squamosa promoter-binding-like protein 6 (SPL6) from Oryza sativa subsp. japonica (Rice).